Here is a 267-residue protein sequence, read N- to C-terminus: Phosphate import ATP-binding protein PstB (267 aa).

An ABC transporter domain is found at 21–262 (VAARNLDFYY…PSKQQTEDYI (242 aa)). 53–60 (GPSGCGKS) is a binding site for ATP.

It belongs to the ABC transporter superfamily. Phosphate importer (TC 3.A.1.7) family. As to quaternary structure, the complex is composed of two ATP-binding proteins (PstB), two transmembrane proteins (PstC and PstA) and a solute-binding protein (PstS).

The protein resides in the cell inner membrane. The catalysed reaction is phosphate(out) + ATP + H2O = ADP + 2 phosphate(in) + H(+). Functionally, part of the ABC transporter complex PstSACB involved in phosphate import. Responsible for energy coupling to the transport system. This Xanthomonas campestris pv. campestris (strain 8004) protein is Phosphate import ATP-binding protein PstB.